We begin with the raw amino-acid sequence, 864 residues long: Protein translocase subunit SecA (864 aa).

ATP contacts are provided by residues glutamine 87, 105–109 (GEGKT), and aspartate 512.

The protein belongs to the SecA family. As to quaternary structure, monomer and homodimer. Part of the essential Sec protein translocation apparatus which comprises SecA, SecYEG and auxiliary proteins SecDF-YajC and YidC.

It localises to the cell inner membrane. The protein localises to the cytoplasm. The catalysed reaction is ATP + H2O + cellular proteinSide 1 = ADP + phosphate + cellular proteinSide 2.. Functionally, part of the Sec protein translocase complex. Interacts with the SecYEG preprotein conducting channel. Has a central role in coupling the hydrolysis of ATP to the transfer of proteins into and across the cell membrane, serving as an ATP-driven molecular motor driving the stepwise translocation of polypeptide chains across the membrane. In Buchnera aphidicola subsp. Cinara cedri (strain Cc), this protein is Protein translocase subunit SecA.